The primary structure comprises 501 residues: Aspartyl/glutamyl-tRNA(Asn/Gln) amidotransferase subunit B (501 aa).

The protein belongs to the GatB/GatE family. GatB subfamily. In terms of assembly, heterotrimer of A, B and C subunits.

The enzyme catalyses L-glutamyl-tRNA(Gln) + L-glutamine + ATP + H2O = L-glutaminyl-tRNA(Gln) + L-glutamate + ADP + phosphate + H(+). It catalyses the reaction L-aspartyl-tRNA(Asn) + L-glutamine + ATP + H2O = L-asparaginyl-tRNA(Asn) + L-glutamate + ADP + phosphate + 2 H(+). Its function is as follows. Allows the formation of correctly charged Asn-tRNA(Asn) or Gln-tRNA(Gln) through the transamidation of misacylated Asp-tRNA(Asn) or Glu-tRNA(Gln) in organisms which lack either or both of asparaginyl-tRNA or glutaminyl-tRNA synthetases. The reaction takes place in the presence of glutamine and ATP through an activated phospho-Asp-tRNA(Asn) or phospho-Glu-tRNA(Gln). The chain is Aspartyl/glutamyl-tRNA(Asn/Gln) amidotransferase subunit B from Agrobacterium fabrum (strain C58 / ATCC 33970) (Agrobacterium tumefaciens (strain C58)).